The primary structure comprises 1250 residues: Phospholipid-transporting ATPase IC (1250 aa).

Acidic residues-rich tracts occupy residues 1–13 and 24–40; these read MDTDYESTYEDDS and SDDETDDELDSPQTDEP. Residues 1-52 are disordered; sequence MDTDYESTYEDDSQVPNDDVVPYSDDETDDELDSPQTDEPEQNRRNVQAEQS. The Cytoplasmic segment spans residues 1–133; sequence MDTDYESTYE…VLLILQTIPQ (133 aa). Residues 134–154 form a helical membrane-spanning segment; it reads ISTVTWSTTLIPLLLVLGITA. Topologically, residues 155–338 are exoplasmic loop; sequence IKDLVDDIAR…TKIDYLMNYM (184 aa). A helical transmembrane segment spans residues 339–359; that stretch reads VYTIFVLLILAAAGLAIGQTF. Residues 360–385 are Cytoplasmic-facing; sequence WEAKLGAANVSWYLYDGNNYSPSYRG. The chain crosses the membrane as a helical span at residues 386–406; it reads FLAFWGYIIVLNTMVPISLYV. The Exoplasmic loop segment spans residues 407–956; the sequence is SVEVIRLGQS…KFLRYFFYKN (550 aa). The 4-aspartylphosphate intermediate role is filled by Asp-454. Asp-454, Lys-455, Thr-456, Glu-553, Phe-594, Lys-617, Arg-650, Thr-730, Gly-731, Asp-732, Arg-865, and Lys-871 together coordinate ATP. Residue Asp-454 coordinates Mg(2+). Thr-456 is a binding site for Mg(2+). Residue Asp-891 participates in Mg(2+) binding. ATP-binding residues include Asn-894 and Asp-895. A Mg(2+)-binding site is contributed by Asp-895. A helical transmembrane segment spans residues 957–977; that stretch reads FSFTLVHFWYSFFNGFSAQTV. The Cytoplasmic segment spans residues 978–980; it reads YED. A helical transmembrane segment spans residues 981–1001; it reads WFITLYNVLYSSLPVLLVGLL. The Exoplasmic loop segment spans residues 1002–1034; that stretch reads DQDVSDKLSLAFPRLYVPGQKDLLFNYKKFFLS. A helical transmembrane segment spans residues 1035-1055; sequence LFHGIVTSLIIFFIPYGAFLL. Residues 1056 to 1069 are Cytoplasmic-facing; it reads TMGQDGEAPSDYQS. The chain crosses the membrane as a helical span at residues 1070–1090; that stretch reads FAVTTATALVITVNFQIGLDT. Residues 1091–1092 lie on the Exoplasmic loop side of the membrane; sequence SY. Residues 1093-1113 traverse the membrane as a helical segment; that stretch reads WTFVNAFSIFGSIAIYFGIMF. Residues 1114–1117 are Cytoplasmic-facing; it reads DLHS. A helical transmembrane segment spans residues 1118–1138; sequence AGIHVLFPSMFIFTGAAPNAL. Over 1139–1140 the chain is Exoplasmic loop; that stretch reads RQ. A helical membrane pass occupies residues 1141–1161; the sequence is PYLWLTIILTVAFCLLPIVAL. The Cytoplasmic portion of the chain corresponds to 1162–1250; the sequence is RFLAKTIWPS…AQITHFTPQT (89 aa).

Belongs to the cation transport ATPase (P-type) (TC 3.A.3) family. Type IV subfamily. In terms of assembly, component of a P4-ATPase flippase complex which consists of a catalytic alpha subunit and an accessory beta subunit. The flippase ATP8B1:TMEM30A complex can form an intermediate phosphoenzyme in vitro. Also interacts with beta subunit TMEM30B. Mg(2+) is required as a cofactor.

It is found in the cell membrane. The protein resides in the apical cell membrane. The protein localises to the cell projection. Its subcellular location is the stereocilium. It localises to the endoplasmic reticulum. It is found in the golgi apparatus. It catalyses the reaction ATP + H2O + phospholipidSide 1 = ADP + phosphate + phospholipidSide 2.. It carries out the reaction a 1,2-diacyl-sn-glycero-3-phospho-L-serine(out) + ATP + H2O = a 1,2-diacyl-sn-glycero-3-phospho-L-serine(in) + ADP + phosphate + H(+). Catalytic component of a P4-ATPase flippase complex which catalyzes the hydrolysis of ATP coupled to the transport of aminophospholipids from the outer to the inner leaflet of various membranes and ensures the maintenance of asymmetric distribution of phospholipids. Phospholipid translocation also seems to be implicated in vesicle formation and in uptake of lipid signaling molecules. May also participate in the establishment of the canalicular membrane integrity by ensuring asymmetric distribution of phospholipids in the canicular membrane. This is Phospholipid-transporting ATPase IC (atp8b1) from Xenopus tropicalis (Western clawed frog).